The chain runs to 366 residues: Phospho-N-acetylmuramoyl-pentapeptide-transferase (366 aa).

Transmembrane regions (helical) follow at residues 27 to 47, 71 to 91, 93 to 113, 134 to 154, 174 to 194, 205 to 225, 245 to 265, 268 to 288, 294 to 314, and 343 to 363; these read AALF…INSL, TPTM…LLWA, LSNV…AIGF, LGIE…TALA, FMIN…VGAG, GLAI…AYLA, LAVV…FNAP, AIFM…TVAV, IVMA…IIQV, and QVVI…LSTL.

Belongs to the glycosyltransferase 4 family. MraY subfamily. Requires Mg(2+) as cofactor.

Its subcellular location is the cell inner membrane. The enzyme catalyses UDP-N-acetyl-alpha-D-muramoyl-L-alanyl-gamma-D-glutamyl-meso-2,6-diaminopimeloyl-D-alanyl-D-alanine + di-trans,octa-cis-undecaprenyl phosphate = di-trans,octa-cis-undecaprenyl diphospho-N-acetyl-alpha-D-muramoyl-L-alanyl-D-glutamyl-meso-2,6-diaminopimeloyl-D-alanyl-D-alanine + UMP. The protein operates within cell wall biogenesis; peptidoglycan biosynthesis. Catalyzes the initial step of the lipid cycle reactions in the biosynthesis of the cell wall peptidoglycan: transfers peptidoglycan precursor phospho-MurNAc-pentapeptide from UDP-MurNAc-pentapeptide onto the lipid carrier undecaprenyl phosphate, yielding undecaprenyl-pyrophosphoryl-MurNAc-pentapeptide, known as lipid I. The chain is Phospho-N-acetylmuramoyl-pentapeptide-transferase from Rhizobium leguminosarum bv. trifolii (strain WSM2304).